Consider the following 399-residue polypeptide: 26S proteasome regulatory subunit S10B homolog B (399 aa).

180 to 187 (GPPGTGKT) lines the ATP pocket. A Glycyl lysine isopeptide (Lys-Gly) (interchain with G-Cter in ubiquitin) cross-link involves residue Lys-203.

This sequence belongs to the AAA ATPase family. In terms of assembly, component of the 19S regulatory particle (RP/PA700) base subcomplex of the 26S proteasome. The 26S proteasome is composed of a core protease (CP), known as the 20S proteasome, capped at one or both ends by the 19S regulatory particle (RP/PA700). The RP/PA700 complex is composed of at least 17 different subunits in two subcomplexes, the base and the lid, which form the portions proximal and distal to the 20S proteolytic core, respectively.

The protein resides in the cytoplasm. It is found in the nucleus. Functionally, the 26S proteasome is involved in the ATP-dependent degradation of ubiquitinated proteins. The regulatory (or ATPase) complex confers ATP dependency and substrate specificity to the 26S complex. The sequence is that of 26S proteasome regulatory subunit S10B homolog B (RPT4B) from Arabidopsis thaliana (Mouse-ear cress).